Reading from the N-terminus, the 222-residue chain is UPF0758 protein YicR (222 aa).

In terms of domain architecture, MPN spans 100-222; that stretch reads PLLSPEMTRE…YVSFAERGWI (123 aa). The Zn(2+) site is built by His171, His173, and Asp184. The JAMM motif signature appears at 171–184; it reads HNHPSGCAEPSKAD.

Belongs to the UPF0758 family. YicR subfamily.

The protein is UPF0758 protein YicR of Escherichia coli O81 (strain ED1a).